The following is a 476-amino-acid chain: Aspartyl/glutamyl-tRNA(Asn/Gln) amidotransferase subunit B (476 aa).

This sequence belongs to the GatB/GatE family. GatB subfamily. In terms of assembly, heterotrimer of A, B and C subunits.

The enzyme catalyses L-glutamyl-tRNA(Gln) + L-glutamine + ATP + H2O = L-glutaminyl-tRNA(Gln) + L-glutamate + ADP + phosphate + H(+). It carries out the reaction L-aspartyl-tRNA(Asn) + L-glutamine + ATP + H2O = L-asparaginyl-tRNA(Asn) + L-glutamate + ADP + phosphate + 2 H(+). Allows the formation of correctly charged Asn-tRNA(Asn) or Gln-tRNA(Gln) through the transamidation of misacylated Asp-tRNA(Asn) or Glu-tRNA(Gln) in organisms which lack either or both of asparaginyl-tRNA or glutaminyl-tRNA synthetases. The reaction takes place in the presence of glutamine and ATP through an activated phospho-Asp-tRNA(Asn) or phospho-Glu-tRNA(Gln). The polypeptide is Aspartyl/glutamyl-tRNA(Asn/Gln) amidotransferase subunit B (Bacillus licheniformis (strain ATCC 14580 / DSM 13 / JCM 2505 / CCUG 7422 / NBRC 12200 / NCIMB 9375 / NCTC 10341 / NRRL NRS-1264 / Gibson 46)).